Here is a 606-residue protein sequence, read N- to C-terminus: Mannan endo-1,4-beta-mannosidase A (606 aa).

The N-terminal stretch at Met1 to Ser19 is a signal peptide. Residues Val22–Asn140 form the CBM6 domain. The region spanning Pro164–Asp458 is the GH26 domain. Residue Trp285 coordinates substrate. Glu318 functions as the Proton donor in the catalytic mechanism. Residues Trp323 and Tyr378 each coordinate substrate. Residue Glu406 is the Nucleophile of the active site. Residues Ser472–Ser489 are linker. CBM10 domains are found at residues Glu491–Val527, Ser530–Val566, and Ser569–Leu605. A substrate-binding site is contributed by Trp493.

The protein belongs to the glycosyl hydrolase 26 family.

The catalysed reaction is Random hydrolysis of (1-&gt;4)-beta-D-mannosidic linkages in mannans, galactomannans and glucomannans.. In terms of biological role, hydrolyzes 1,4-beta linked polysaccharide backbones of mannans, one of the major hemicellulose components in hardwoods and softwoods. Shows very high activity against mannohexaose but not against mannopentaose and smaller mannooligosaccharides. The major products released from mannooligosaccharide hydrolysis are mannose and mannobiose. The reiterated 40 AA domain is involved in binding the cellulase-hemicellulase complex. In Piromyces sp, this protein is Mannan endo-1,4-beta-mannosidase A (MANA).